Here is a 238-residue protein sequence, read N- to C-terminus: Keratin-associated protein 5-3 (238 aa).

11 tandem repeats follow at residues 35 to 38, 41 to 44, 47 to 50, 91 to 94, 150 to 153, 160 to 163, 170 to 173, 189 to 192, 199 to 202, 218 to 221, and 228 to 231. The tract at residues 35-231 is 11 X 4 AA repeats of C-C-X-P; that stretch reads CCVPVCCCKP…CSSQSSCCVP (197 aa).

It belongs to the KRTAP type 5 family. As to quaternary structure, interacts with hair keratins. Restricted to hair root, not detected in any other tissues.

In the hair cortex, hair keratin intermediate filaments are embedded in an interfilamentous matrix, consisting of hair keratin-associated protein (KRTAP), which are essential for the formation of a rigid and resistant hair shaft through their extensive disulfide bond cross-linking with abundant cysteine residues of hair keratins. The matrix proteins include the high-sulfur and high-glycine-tyrosine keratins. In Homo sapiens (Human), this protein is Keratin-associated protein 5-3 (KRTAP5-3).